The sequence spans 225 residues: Sirohydrochlorin ferrochelatase, chloroplastic (225 aa).

The N-terminal 46 residues, 1 to 46 (MTTQSQFLVNLSYGGLASQSNLRANNRVSPSSCQITRTNRSWALPV), are a transit peptide targeting the chloroplast. The Fe cation site is built by histidine 89 and histidine 155. [4Fe-4S] cluster is bound by residues cysteine 199, cysteine 210, cysteine 213, and cysteine 219.

It belongs to the CbiX family. SirB subfamily. As to quaternary structure, homodimer. It depends on [4Fe-4S] cluster as a cofactor.

The protein localises to the plastid. It localises to the chloroplast. The catalysed reaction is siroheme + 2 H(+) = sirohydrochlorin + Fe(2+). The protein operates within porphyrin-containing compound metabolism; siroheme biosynthesis; siroheme from sirohydrochlorin: step 1/1. In terms of biological role, chelates iron to the siroheme precursor. Catalyzes the last step of the siroheme biosynthesis. Unlike its counterparts in bacteria, contains an [Fe-S] cluster which is not involved directly in the enzymatic reaction, but may play regulatory role in iron, sulfur and tetrapyrrole metabolism. The [Fe-S] cluster is required for normal plant growth. The chain is Sirohydrochlorin ferrochelatase, chloroplastic from Arabidopsis thaliana (Mouse-ear cress).